The following is a 249-amino-acid chain: 2,3-bisphosphoglycerate-dependent phosphoglycerate mutase (249 aa).

Residues 8–15, 21–22, Arg-60, 87–90, Lys-98, 114–115, and 183–184 each bind substrate; these read RHGESQWN, TG, ERHY, RR, and GN. His-9 functions as the Tele-phosphohistidine intermediate in the catalytic mechanism. The Proton donor/acceptor role is filled by Glu-87.

The protein belongs to the phosphoglycerate mutase family. BPG-dependent PGAM subfamily.

The enzyme catalyses (2R)-2-phosphoglycerate = (2R)-3-phosphoglycerate. It functions in the pathway carbohydrate degradation; glycolysis; pyruvate from D-glyceraldehyde 3-phosphate: step 3/5. Catalyzes the interconversion of 2-phosphoglycerate and 3-phosphoglycerate. The polypeptide is 2,3-bisphosphoglycerate-dependent phosphoglycerate mutase (Pelodictyon phaeoclathratiforme (strain DSM 5477 / BU-1)).